The following is a 334-amino-acid chain: HTH-type transcriptional repressor PurR (334 aa).

An HTH lacI-type domain is found at 2–56; sequence ATIKDVARLAGVSTTTVSHVINKTRFVAETTQEKVMKAVDELNYAPSAVARSLKC. The H-T-H motif DNA-binding region spans 4 to 23; the sequence is IKDVARLAGVSTTTVSHVIN. A DNA-binding region spans residues 48 to 56; that stretch reads SAVARSLKC. Hypoxanthine is bound by residues phenylalanine 73, lysine 189, phenylalanine 220, and aspartate 274.

As to quaternary structure, homodimer.

The protein operates within purine metabolism; purine nucleotide biosynthesis [regulation]. Is the main repressor of the genes involved in the de novo synthesis of purine nucleotides, regulating purB, purC, purEK, purF, purHD, purL, purMN and guaBA expression. PurR is allosterically activated to bind its cognate DNA by binding the purine corepressors, hypoxanthine or guanine, thereby effecting transcription repression. The polypeptide is HTH-type transcriptional repressor PurR (Vibrio campbellii (strain ATCC BAA-1116)).